The primary structure comprises 118 residues: MARVKRGVTSHAKHKKVLKAVKGQWGRRKSTIRVAKQAMEKAMQYAYRDRRTKKREFKSLWIQRINAGVRSEGITYSKFINGLTKCGIKLDRKILAEIAYDSPEAFKTIVQKAQSALN.

Belongs to the bacterial ribosomal protein bL20 family.

In terms of biological role, binds directly to 23S ribosomal RNA and is necessary for the in vitro assembly process of the 50S ribosomal subunit. It is not involved in the protein synthesizing functions of that subunit. The chain is Large ribosomal subunit protein bL20 from Pelagibacter ubique (strain HTCC1062).